Reading from the N-terminus, the 295-residue chain is Small ribosomal subunit protein uS2 (295 aa).

N-acetylserine is present on Ser2. The residue at position 43 (Ser43) is a Phosphoserine. An N6-acetyllysine modification is found at Lys52. The interaction with PPP1R16B stretch occupies residues Thr54–Gln113. Position 89 is an N6-acetyllysine; alternate (Lys89). Lys89 participates in a covalent cross-link: Glycyl lysine isopeptide (Lys-Gly) (interchain with G-Cter in SUMO2); alternate. Position 97 is a phosphothreonine (Thr97). 2 laminin-binding regions span residues Ile161–Arg180 and Arg205–Gly229. 5 [DE]-W-[ST] repeats span residues Glu230–Thr232, Asp247–Ser249, Asp266–Ser268, Asp275–Ser277, and Glu293–Ser295. A laminin-binding region spans residues Gln242–Ser295. The tract at residues Asp266 to Ser295 is disordered.

This sequence belongs to the universal ribosomal protein uS2 family. As to quaternary structure, monomer (37LRP) and homodimer (67LR). Component of the small ribosomal subunit. Mature ribosomes consist of a small (40S) and a large (60S) subunit. The 40S subunit contains about 33 different proteins and 1 molecule of RNA (18S). The 60S subunit contains about 49 different proteins and 3 molecules of RNA (28S, 5.8S and 5S). Interacts with RPS21. Interacts with several laminins including at least LAMB1. Interacts with MDK. Interacts with PRNP. The mature dimeric form interacts with PPP1R16B (via its fourth ankyrin repeat). Interacts with PPP1CA only in the presence of PPP1R16B. In terms of processing, acylated. Acylation may be a prerequisite for conversion of the monomeric 37 kDa laminin receptor precursor (37LRP) to the mature dimeric 67 kDa laminin receptor (67LR), and may provide a mechanism for membrane association. Cleaved by stromelysin-3 (ST3) at the cell surface. Cleavage by stromelysin-3 may be a mechanism to alter cell-extracellular matrix interactions.

It is found in the cell membrane. The protein localises to the cytoplasm. Its subcellular location is the nucleus. Its function is as follows. Required for the assembly and/or stability of the 40S ribosomal subunit. Required for the processing of the 20S rRNA-precursor to mature 18S rRNA in a late step of the maturation of 40S ribosomal subunits. Also functions as a cell surface receptor for laminin. Plays a role in cell adhesion to the basement membrane and in the consequent activation of signaling transduction pathways. May play a role in cell fate determination and tissue morphogenesis. Also acts as a receptor for several other ligands, including the pathogenic prion protein, viruses, and bacteria. Acts as a PPP1R16B-dependent substrate of PPP1CA. Enables malignant tumor cells to penetrate laminin tissue and vessel barriers. Activates precursor thymic anti-OFA/iLRP specific cytotoxic T-cell. May induce CD8 T-suppressor cells secreting IL-10. The protein is Small ribosomal subunit protein uS2 (Rpsa) of Mus musculus (Mouse).